The sequence spans 237 residues: 2',3'-cyclic-nucleotide 3'-phosphodiesterase (237 aa).

Residue histidine 21 is the Proton donor/acceptor of the active site. Threonine 23 is a binding site for substrate. Positions 117 to 137 (HLYTTDSHGNTVKKKSKQSQD) are disordered. Histidine 167 acts as the Proton donor/acceptor in catalysis. Substrate is bound by residues serine 169 and tyrosine 172.

It belongs to the 2H phosphoesterase superfamily. CPD1 family.

The protein localises to the golgi apparatus. The catalysed reaction is a nucleoside 2',3'-cyclic phosphate + H2O = a nucleoside 2'-phosphate + H(+). In terms of biological role, involved in the metabolism of ADP-ribose 1',2'-cyclic phosphate which is produced as a consequence of tRNA splicing. In Debaryomyces hansenii (strain ATCC 36239 / CBS 767 / BCRC 21394 / JCM 1990 / NBRC 0083 / IGC 2968) (Yeast), this protein is 2',3'-cyclic-nucleotide 3'-phosphodiesterase (CPD1).